The chain runs to 855 residues: Envelope glycoprotein gp160 (855 aa).

Residues 1–31 (MTARGTRKNYQRLWRWGTMLLGMLMICSAAE) form the signal peptide. Topologically, residues 32–683 (NLWVTVYYGV…ITNWLWYIRI (652 aa)) are extracellular. Residues cysteine 53 and cysteine 73 are joined by a disulfide bond. 17 N-linked (GlcNAc...) asparagine; by host glycosylation sites follow: asparagine 87, asparagine 134, asparagine 142, asparagine 145, asparagine 161, asparagine 165, asparagine 192, asparagine 202, asparagine 239, asparagine 246, asparagine 267, asparagine 281, asparagine 294, asparagine 300, asparagine 306, asparagine 336, and asparagine 359. 5 cysteine pairs are disulfide-bonded: cysteine 118–cysteine 210, cysteine 125–cysteine 201, cysteine 130–cysteine 162, cysteine 223–cysteine 252, and cysteine 233–cysteine 244. A V1 region spans residues 130–161 (CTDVNTTSSSLRNATNTTSSSWETMEKGELKN). The V2 stretch occupies residues 162 to 201 (CSFNTTTSIRDKMQEQYALFYKLDVLPIDKNDTKFRLIHC). The V3 stretch occupies residues 301-334 (CTRPNNNTRNRISIGPGRAFHTTKQIIGDIRQAH). A disulfide bridge links cysteine 301 with cysteine 335. Residues 367–377 (SSGGDPEIVMH) form a CD4-binding loop region. 2 cysteine pairs are disulfide-bonded: cysteine 381–cysteine 442 and cysteine 388–cysteine 415. The segment at 388-415 (CNTSQLFNSTWNDTTRANSTEVTITLPC) is V4. N-linked (GlcNAc...) asparagine; by host glycosylation is found at asparagine 389, asparagine 395, asparagine 399, asparagine 405, and asparagine 458. V5 stretches follow at residues 458 to 469 (NTTNGIEIFRPA) and 460 to 469 (TNGIEIFRPA). The tract at residues 510–531 (AVGMLGAMFLGFLGAAGSTMGA) is fusion peptide. Residues 573–591 (KQLQARVLAVERYLKDQQL) form an immunosuppression region. Cysteines 597 and 603 form a disulfide. Asparagine 610, asparagine 615, asparagine 624, and asparagine 636 each carry an N-linked (GlcNAc...) asparagine; by host glycan. Residues 632-666 (REIDNYTHLIYTLIEESQNQQEKNEQELLELDKWA) adopt a coiled-coil conformation. The MPER; binding to GalCer stretch occupies residues 661–682 (ELDKWAGLWSWFSITNWLWYIR). Residues 684–704 (FIIIVGGLVGLRIVFAVLSIV) form a helical membrane-spanning segment. At 705 to 855 (NRVRQGYSPL…IRQGLERALL (151 aa)) the chain is on the cytoplasmic side. A YXXL motif; contains endocytosis signal motif is present at residues 711–714 (YSPL). The segment at 718-742 (TRLPTQRGPDRPEGIEEEGGERDRD) is disordered. Residue cysteine 763 is the site of S-palmitoyl cysteine; by host attachment. The short motif at 854-855 (LL) is the Di-leucine internalization motif element.

The protein belongs to the HIV-1 env protein family. The mature envelope protein (Env) consists of a homotrimer of non-covalently associated gp120-gp41 heterodimers. The resulting complex protrudes from the virus surface as a spike. There seems to be as few as 10 spikes on the average virion. Interacts with host CD4, CCR5 and CXCR4. Gp120 also interacts with the C-type lectins CD209/DC-SIGN and CLEC4M/DC-SIGNR (collectively referred to as DC-SIGN(R)). Gp120 and gp41 interact with GalCer. Gp120 interacts with host ITGA4/ITGB7 complex; on CD4+ T-cells, this interaction results in rapid activation of integrin ITGAL/LFA-1, which facilitates efficient cell-to-cell spreading of HIV-1. Gp120 interacts with cell-associated heparan sulfate; this interaction increases virus infectivity on permissive cells and may be involved in infection of CD4- cells. In terms of assembly, the mature envelope protein (Env) consists of a homotrimer of non-covalently associated gp120-gp41 heterodimers. The resulting complex protrudes from the virus surface as a spike. There seems to be as few as 10 spikes on the average virion. Post-translationally, highly glycosylated by host. The high number of glycan on the protein is reffered to as 'glycan shield' because it contributes to hide protein sequence from adaptive immune system. In terms of processing, palmitoylation of the transmembrane protein and of Env polyprotein (prior to its proteolytic cleavage) is essential for their association with host cell membrane lipid rafts. Palmitoylation is therefore required for envelope trafficking to classical lipid rafts, but not for viral replication. Specific enzymatic cleavages in vivo yield mature proteins. Envelope glycoproteins are synthesized as an inactive precursor that is heavily N-glycosylated and processed likely by host cell furin in the Golgi to yield the mature SU and TM proteins. The cleavage site between SU and TM requires the minimal sequence [KR]-X-[KR]-R. About 2 of the 9 disulfide bonds of gp41 are reduced by P4HB/PDI, following binding to CD4 receptor.

Its subcellular location is the virion membrane. The protein localises to the host cell membrane. It is found in the host endosome membrane. Its function is as follows. Oligomerizes in the host endoplasmic reticulum into predominantly trimers. In a second time, gp160 transits in the host Golgi, where glycosylation is completed. The precursor is then proteolytically cleaved in the trans-Golgi and thereby activated by cellular furin or furin-like proteases to produce gp120 and gp41. Functionally, attaches the virus to the host lymphoid cell by binding to the primary receptor CD4. This interaction induces a structural rearrangement creating a high affinity binding site for a chemokine coreceptor like CXCR4 and/or CCR5. Acts as a ligand for CD209/DC-SIGN and CLEC4M/DC-SIGNR, which are respectively found on dendritic cells (DCs), and on endothelial cells of liver sinusoids and lymph node sinuses. These interactions allow capture of viral particles at mucosal surfaces by these cells and subsequent transmission to permissive cells. HIV subverts the migration properties of dendritic cells to gain access to CD4+ T-cells in lymph nodes. Virus transmission to permissive T-cells occurs either in trans (without DCs infection, through viral capture and transmission), or in cis (following DCs productive infection, through the usual CD4-gp120 interaction), thereby inducing a robust infection. In trans infection, bound virions remain infectious over days and it is proposed that they are not degraded, but protected in non-lysosomal acidic organelles within the DCs close to the cell membrane thus contributing to the viral infectious potential during DCs' migration from the periphery to the lymphoid tissues. On arrival at lymphoid tissues, intact virions recycle back to DCs' cell surface allowing virus transmission to CD4+ T-cells. In terms of biological role, acts as a class I viral fusion protein. Under the current model, the protein has at least 3 conformational states: pre-fusion native state, pre-hairpin intermediate state, and post-fusion hairpin state. During fusion of viral and target intracellular membranes, the coiled coil regions (heptad repeats) assume a trimer-of-hairpins structure, positioning the fusion peptide in close proximity to the C-terminal region of the ectodomain. The formation of this structure appears to drive apposition and subsequent fusion of viral and target cell membranes. Complete fusion occurs in host cell endosomes and is dynamin-dependent, however some lipid transfer might occur at the plasma membrane. The virus undergoes clathrin-dependent internalization long before endosomal fusion, thus minimizing the surface exposure of conserved viral epitopes during fusion and reducing the efficacy of inhibitors targeting these epitopes. Membranes fusion leads to delivery of the nucleocapsid into the cytoplasm. In Homo sapiens (Human), this protein is Envelope glycoprotein gp160.